A 471-amino-acid polypeptide reads, in one-letter code: Ribulose bisphosphate carboxylase large chain 2 (471 aa).

Asn-116 and Thr-166 together coordinate substrate. Lys-168 acts as the Proton acceptor in catalysis. Residue Lys-170 participates in substrate binding. 3 residues coordinate Mg(2+): Lys-194, Asp-196, and Glu-197. Lys-194 is modified (N6-carboxylysine). The active-site Proton acceptor is His-287. Arg-288, His-320, and Ser-372 together coordinate substrate.

Belongs to the RuBisCO large chain family. Type I subfamily. As to quaternary structure, heterohexadecamer of 8 large chains and 8 small chains. It depends on Mg(2+) as a cofactor.

The protein resides in the carboxysome. The catalysed reaction is 2 (2R)-3-phosphoglycerate + 2 H(+) = D-ribulose 1,5-bisphosphate + CO2 + H2O. The enzyme catalyses D-ribulose 1,5-bisphosphate + O2 = 2-phosphoglycolate + (2R)-3-phosphoglycerate + 2 H(+). In terms of biological role, ruBisCO catalyzes two reactions: the carboxylation of D-ribulose 1,5-bisphosphate, the primary event in carbon dioxide fixation, as well as the oxidative fragmentation of the pentose substrate. Both reactions occur simultaneously and in competition at the same active site. In Hydrogenovibrio marinus, this protein is Ribulose bisphosphate carboxylase large chain 2.